Consider the following 148-residue polypeptide: Deoxyuridine 5'-triphosphate nucleotidohydrolase (148 aa).

Residues 67–69 (RSG), asparagine 80, 84–86 (LID), and methionine 94 each bind substrate.

Belongs to the dUTPase family. It depends on Mg(2+) as a cofactor.

It catalyses the reaction dUTP + H2O = dUMP + diphosphate + H(+). It participates in pyrimidine metabolism; dUMP biosynthesis; dUMP from dCTP (dUTP route): step 2/2. This enzyme is involved in nucleotide metabolism: it produces dUMP, the immediate precursor of thymidine nucleotides and it decreases the intracellular concentration of dUTP so that uracil cannot be incorporated into DNA. The chain is Deoxyuridine 5'-triphosphate nucleotidohydrolase from Francisella tularensis subsp. tularensis (strain FSC 198).